The following is a 315-amino-acid chain: Uracil-DNA glycosylase (315 aa).

The segment covering 35–80 (AAAAAPAGAGAGASKPARPPAAARPAKGTPAASAATTATGADASAP) has biased composition (low complexity). The interval 35–88 (AAAAAPAGAGAGASKPARPPAAARPAKGTPAASAATTATGADASAPAPDPGAPT) is disordered. The Proton acceptor role is filled by D158.

The protein belongs to the uracil-DNA glycosylase (UDG) superfamily. UNG family.

It localises to the host nucleus. It carries out the reaction Hydrolyzes single-stranded DNA or mismatched double-stranded DNA and polynucleotides, releasing free uracil.. Excises uracil residues from the DNA which can arise as a result of misincorporation of dUMP residues by DNA polymerase or deamination of cytosines. Therefore may reduce deleterious uracil incorporation into the viral genome, particularly in terminally differentiated cells which lack DNA repair enzymes. The chain is Uracil-DNA glycosylase (UL2) from Suid herpesvirus 1 (strain Indiana-Funkhauser / Becker) (SuHV-1).